A 601-amino-acid chain; its full sequence is Amino-acid acetyltransferase, mitochondrial (601 aa).

The region spanning 401–558 is the N-acetyltransferase domain; that stretch reads FTMDNLIASK…KKKQNNKKKK (158 aa).

The protein belongs to the acetyltransferase family.

Its subcellular location is the mitochondrion. It catalyses the reaction L-glutamate + acetyl-CoA = N-acetyl-L-glutamate + CoA + H(+). Its pathway is amino-acid biosynthesis; L-arginine biosynthesis; N(2)-acetyl-L-ornithine from L-glutamate: step 1/4. In terms of biological role, N-acetylglutamate synthase involved in arginine biosynthesis. The sequence is that of Amino-acid acetyltransferase, mitochondrial (ARG2) from Lodderomyces elongisporus (strain ATCC 11503 / CBS 2605 / JCM 1781 / NBRC 1676 / NRRL YB-4239) (Yeast).